The following is a 562-amino-acid chain: NAD-dependent malic enzyme (562 aa).

The active-site Proton donor is Tyr-101. Arg-154 contacts NAD(+). Lys-172 acts as the Proton acceptor in catalysis. Residues Glu-243, Asp-244, and Asp-267 each coordinate a divalent metal cation. The NAD(+) site is built by Asp-267 and Asn-415.

It belongs to the malic enzymes family. As to quaternary structure, homotetramer. Mg(2+) is required as a cofactor. The cofactor is Mn(2+).

The enzyme catalyses (S)-malate + NAD(+) = pyruvate + CO2 + NADH. It carries out the reaction oxaloacetate + H(+) = pyruvate + CO2. This is NAD-dependent malic enzyme from Shewanella piezotolerans (strain WP3 / JCM 13877).